The sequence spans 380 residues: Beta sliding clamp (380 aa).

It belongs to the beta sliding clamp family. As to quaternary structure, forms a ring-shaped head-to-tail homodimer around DNA which binds and tethers DNA polymerases and other proteins to the DNA. The DNA replisome complex has a single clamp-loading complex (3 tau and 1 each of delta, delta', psi and chi subunits) which binds 3 Pol III cores (1 core on the leading strand and 2 on the lagging strand) each with a beta sliding clamp dimer. Additional proteins in the replisome are other copies of gamma, psi and chi, Ssb, DNA helicase and RNA primase.

It is found in the cytoplasm. Its function is as follows. Confers DNA tethering and processivity to DNA polymerases and other proteins. Acts as a clamp, forming a ring around DNA (a reaction catalyzed by the clamp-loading complex) which diffuses in an ATP-independent manner freely and bidirectionally along dsDNA. Initially characterized for its ability to contact the catalytic subunit of DNA polymerase III (Pol III), a complex, multichain enzyme responsible for most of the replicative synthesis in bacteria; Pol III exhibits 3'-5' exonuclease proofreading activity. The beta chain is required for initiation of replication as well as for processivity of DNA replication. The polypeptide is Beta sliding clamp (dnaN) (Lactococcus lactis subsp. lactis (strain IL1403) (Streptococcus lactis)).